Consider the following 198-residue polypeptide: Prostamide/prostaglandin F synthase (198 aa).

A Phosphotyrosine modification is found at Y108.

Belongs to the peroxiredoxin-like PRXL2 family. Prostamide/prostaglandin F synthase subfamily.

Its subcellular location is the cytoplasm. The protein resides in the cytosol. The enzyme catalyses prostaglandin H2 + [thioredoxin]-dithiol = prostaglandin F2alpha + [thioredoxin]-disulfide. It catalyses the reaction prostamide F2alpha + [thioredoxin]-disulfide = prostamide H2 + [thioredoxin]-dithiol. Catalyzes the reduction of prostaglandin-ethanolamide H(2) (prostamide H(2)) to prostamide F(2alpha) with NADPH as proton donor. Also able to reduce prostaglandin H(2) to prostaglandin F(2alpha). This is Prostamide/prostaglandin F synthase from Homo sapiens (Human).